Consider the following 199-residue polypeptide: Ras-related protein Rab-7b (199 aa).

GTP-binding positions include 15 to 22 (GALGVGKT), 34 to 40 (FEEYQTT), 63 to 67 (DTGGQ), 124 to 127 (NKID), and 154 to 155 (AK). 2 consecutive short sequence motifs (switch) follow at residues 28–41 (YVHK…QTTL) and 67–82 (QERF…KGSD). A Phosphoserine modification is found at S186. Residues C198 and C199 are each lipidated (S-geranylgeranyl cysteine).

Belongs to the small GTPase superfamily. Rab family.

The protein resides in the late endosome. Its subcellular location is the lysosome. It is found in the golgi apparatus. The protein localises to the trans-Golgi network. It localises to the cytoplasmic vesicle. The protein resides in the phagosome. Its subcellular location is the phagosome membrane. Its function is as follows. Controls vesicular trafficking from endosomes to the trans-Golgi network (TGN). Acts as a negative regulator of TLR9 signaling and can suppress TLR9-triggered TNFA, IL6, and IFNB production in macrophages by promoting TLR9 lysosomal degradation. Also negatively regulates TLR4 signaling in macrophages by promoting lysosomal degradation of TLR4. Promotes megakaryocytic differentiation by increasing NF-kappa-B-dependent IL6 production and subsequently enhancing the association of STAT3 with GATA1. Not involved in the regulation of the EGF- and EGFR degradation pathway. In Mus musculus (Mouse), this protein is Ras-related protein Rab-7b (Rab7b).